The following is a 384-amino-acid chain: NAD-capped RNA hydrolase NPY1 (384 aa).

Zn(2+)-binding residues include Cys179, Cys182, Cys197, and Cys206. In terms of domain architecture, Nudix hydrolase spans Pro219–Asn351. Mg(2+) is bound by residues Ala256, Glu272, Glu276, and Glu322. Residues Ala256 to Phe258, Glu272, Glu276, and Glu322 each bind substrate. A Nudix box motif is present at residues Gly257–Gly278. The Microbody targeting signal signature appears at Lys378–Ser380.

The protein belongs to the Nudix hydrolase family. NudC subfamily. As to quaternary structure, homodimer. It depends on Mg(2+) as a cofactor. The cofactor is Zn(2+).

It is found in the peroxisome. It catalyses the reaction a 5'-end NAD(+)-phospho-ribonucleoside in mRNA + H2O = a 5'-end phospho-adenosine-phospho-ribonucleoside in mRNA + beta-nicotinamide D-ribonucleotide + 2 H(+). The catalysed reaction is NAD(+) + H2O = beta-nicotinamide D-ribonucleotide + AMP + 2 H(+). The enzyme catalyses NADH + H2O = reduced beta-nicotinamide D-ribonucleotide + AMP + 2 H(+). MRNA decapping enzyme that specifically removes the nicotinamide adenine dinucleotide (NAD) cap from a subset of mRNAs by hydrolyzing the diphosphate linkage to produce nicotinamide mononucleotide (NMN) and 5' monophosphate mRNA. The NAD-cap is present at the 5'-end of some RNAs; in contrast to the canonical N7 methylguanosine (m7G) cap, the NAD cap promotes mRNA decay. Mediates the hydrolysis of some nucleoside diphosphate derivatives. This chain is NAD-capped RNA hydrolase NPY1, found in Saccharomyces cerevisiae (strain ATCC 204508 / S288c) (Baker's yeast).